The chain runs to 207 residues: Ribosomal RNA small subunit methyltransferase G (207 aa).

Residues Gly-76, Gln-81, 127 to 128, and Arg-141 each bind S-adenosyl-L-methionine; that span reads VE.

Belongs to the methyltransferase superfamily. RNA methyltransferase RsmG family.

It localises to the cytoplasm. It carries out the reaction guanosine(527) in 16S rRNA + S-adenosyl-L-methionine = N(7)-methylguanosine(527) in 16S rRNA + S-adenosyl-L-homocysteine. Specifically methylates the N7 position of guanine in position 527 of 16S rRNA. The chain is Ribosomal RNA small subunit methyltransferase G from Neisseria meningitidis serogroup C (strain 053442).